A 250-amino-acid polypeptide reads, in one-letter code: Galectin-3 (250 aa).

Residues 1–60 (MADNFSLHDALSGSGNPNPQGWPGAWGNQPAGAGGYPGASYPGAYPGQAPPGAYPGQAPP) form a disordered region. Ala-2 carries the N-acetylalanine modification. A phosphoserine mark is found at Ser-6 and Ser-12. 3 tandem repeats follow at residues 36–44 (YPGASYPGA), 45–53 (YPGQAPPGA), and 54–62 (YPGQAPPGA). The interval 36 to 109 (YPGASYPGAY…AYPATGPYGA (74 aa)) is 8 X 9 AA tandem repeats of Y-P-G-X(3)-P-G-A. The segment covering 38 to 47 (GASYPGAYPG) has biased composition (low complexity). The segment covering 48-60 (QAPPGAYPGQAPP) has biased composition (pro residues). The stretch at 63-69 (YPGAPGA) is one 4; approximate repeat. Repeat unit 5 spans residues 70 to 78 (YPGAPAPGV). The 6; approximate repeat unit spans residues 79–88 (YPGPPSGPGA). The stretch at 89 to 100 (YPSSGQPSATGA) is one 7; approximate repeat. The stretch at 101–109 (YPATGPYGA) is one 8; approximate repeat. One can recognise a Galectin domain in the interval 118 to 248 (YNLPLPGGVV…DIDLTSASYT (131 aa)). Residue 181–187 (WGREERQ) coordinates a beta-D-galactoside. Position 188 is a phosphoserine (Ser-188). A Nuclear export signal motif is present at residues 226–241 (KKLNEISKLGISGDID).

In terms of assembly, probably forms homo- or heterodimers. Interacts with DMBT1. Interacts with CD6 and ALCAM. Forms a complex with the ITGA3, ITGB1 and CSPG4. Interacts with LGALS3BP, LYPD3, ZFTRAF1 and UACA. Interacts with TRIM16; this interaction mediates autophagy of damage endomembranes. Interacts with cargo receptor TMED10; the interaction mediates the translocation from the cytoplasm into the ERGIC (endoplasmic reticulum-Golgi intermediate compartment) and thereby secretion. A major expression is found in the colonic epithelium. It is also abundant in the activated macrophages. Expressed in fetal membranes.

It is found in the cytoplasm. It localises to the nucleus. The protein resides in the secreted. Galactose-specific lectin which binds IgE. May mediate with the alpha-3, beta-1 integrin the stimulation by CSPG4 of endothelial cells migration. Together with DMBT1, required for terminal differentiation of columnar epithelial cells during early embryogenesis. In the nucleus: acts as a pre-mRNA splicing factor. Involved in acute inflammatory responses including neutrophil activation and adhesion, chemoattraction of monocytes macrophages, opsonization of apoptotic neutrophils, and activation of mast cells. Together with TRIM16, coordinates the recognition of membrane damage with mobilization of the core autophagy regulators ATG16L1 and BECN1 in response to damaged endomembranes. This Homo sapiens (Human) protein is Galectin-3.